The following is a 616-amino-acid chain: Chaperone protein HscA (616 aa).

This sequence belongs to the heat shock protein 70 family.

Functionally, chaperone involved in the maturation of iron-sulfur cluster-containing proteins. Has a low intrinsic ATPase activity which is markedly stimulated by HscB. Involved in the maturation of IscU. This chain is Chaperone protein HscA, found in Escherichia coli O7:K1 (strain IAI39 / ExPEC).